Consider the following 244-residue polypeptide: 2-C-methyl-D-erythritol 4-phosphate cytidylyltransferase (244 aa).

Belongs to the IspD/TarI cytidylyltransferase family. IspD subfamily.

The enzyme catalyses 2-C-methyl-D-erythritol 4-phosphate + CTP + H(+) = 4-CDP-2-C-methyl-D-erythritol + diphosphate. It functions in the pathway isoprenoid biosynthesis; isopentenyl diphosphate biosynthesis via DXP pathway; isopentenyl diphosphate from 1-deoxy-D-xylulose 5-phosphate: step 2/6. Functionally, catalyzes the formation of 4-diphosphocytidyl-2-C-methyl-D-erythritol from CTP and 2-C-methyl-D-erythritol 4-phosphate (MEP). This Corynebacterium diphtheriae (strain ATCC 700971 / NCTC 13129 / Biotype gravis) protein is 2-C-methyl-D-erythritol 4-phosphate cytidylyltransferase.